The chain runs to 257 residues: Hydroxyacylglutathione hydrolase (257 aa).

His-54, His-56, Asp-58, His-59, His-113, Asp-137, and His-175 together coordinate Zn(2+).

It belongs to the metallo-beta-lactamase superfamily. Glyoxalase II family. As to quaternary structure, monomer. Zn(2+) is required as a cofactor.

The catalysed reaction is an S-(2-hydroxyacyl)glutathione + H2O = a 2-hydroxy carboxylate + glutathione + H(+). Its pathway is secondary metabolite metabolism; methylglyoxal degradation; (R)-lactate from methylglyoxal: step 2/2. Functionally, thiolesterase that catalyzes the hydrolysis of S-D-lactoyl-glutathione to form glutathione and D-lactic acid. The chain is Hydroxyacylglutathione hydrolase from Rippkaea orientalis (strain PCC 8801 / RF-1) (Cyanothece sp. (strain PCC 8801)).